The following is a 327-amino-acid chain: Malate dehydrogenase (327 aa).

12 to 18 (GAAGQIA) provides a ligand contact to NAD(+). Residues R93 and R99 each coordinate substrate. Residues N106, Q113, and 130-132 (VGN) each bind NAD(+). Residues N132 and R163 each coordinate substrate. H188 (proton acceptor) is an active-site residue.

It belongs to the LDH/MDH superfamily. MDH type 2 family.

It carries out the reaction (S)-malate + NAD(+) = oxaloacetate + NADH + H(+). Its function is as follows. Catalyzes the reversible oxidation of malate to oxaloacetate. The polypeptide is Malate dehydrogenase (Paraburkholderia phytofirmans (strain DSM 17436 / LMG 22146 / PsJN) (Burkholderia phytofirmans)).